The chain runs to 191 residues: Cell number regulator 1 (191 aa).

Residues 13–44 (FSAGAPPTAPPPPAAYHQQQQQHGANMDTSRP) are disordered. Residues 27 to 37 (AYHQQQQQHGA) are compositionally biased toward low complexity. A helical membrane pass occupies residues 91–113 (IASGLVYGLICASTGMGCLYSCL).

Belongs to the cornifelin family. In terms of tissue distribution, expressed in roots, coleoptiles, stalks and silks. Detected in leaves, apical meristems, immature ears and pericarps. Highest expression in coleoptiles and silks.

Its subcellular location is the membrane. Acts as a negative regulator of cell number. The sequence is that of Cell number regulator 1 (CNR1) from Zea mays (Maize).